Consider the following 239-residue polypeptide: Serine protease SplF (239 aa).

The signal sequence occupies residues 1–36 (MNKNIIIKSIAALTILTSVTGVGTTMVEGIQQTAKA). Active-site charge relay system residues include His75, Asp114, and Ser192.

It belongs to the peptidase S1B family.

Its subcellular location is the secreted. This is Serine protease SplF (splF) from Staphylococcus aureus (strain Mu50 / ATCC 700699).